The chain runs to 334 residues: Glycerol-3-phosphate dehydrogenase [NAD(P)+] (334 aa).

The NADPH site is built by Ser14, Tyr15, His35, and Lys109. Positions 109, 138, and 140 each coordinate sn-glycerol 3-phosphate. NADPH is bound at residue Ala142. Residues Lys194, Asp247, Ser257, Arg258, and Asn259 each contribute to the sn-glycerol 3-phosphate site. Lys194 serves as the catalytic Proton acceptor. Arg258 contacts NADPH. Val282 and Glu284 together coordinate NADPH.

The protein belongs to the NAD-dependent glycerol-3-phosphate dehydrogenase family.

The protein resides in the cytoplasm. It carries out the reaction sn-glycerol 3-phosphate + NAD(+) = dihydroxyacetone phosphate + NADH + H(+). It catalyses the reaction sn-glycerol 3-phosphate + NADP(+) = dihydroxyacetone phosphate + NADPH + H(+). It functions in the pathway membrane lipid metabolism; glycerophospholipid metabolism. Catalyzes the reduction of the glycolytic intermediate dihydroxyacetone phosphate (DHAP) to sn-glycerol 3-phosphate (G3P), the key precursor for phospholipid synthesis. This Aeromonas hydrophila subsp. hydrophila (strain ATCC 7966 / DSM 30187 / BCRC 13018 / CCUG 14551 / JCM 1027 / KCTC 2358 / NCIMB 9240 / NCTC 8049) protein is Glycerol-3-phosphate dehydrogenase [NAD(P)+].